The primary structure comprises 297 residues: 4-hydroxy-tetrahydrodipicolinate synthase (297 aa).

Thr47 serves as a coordination point for pyruvate. Residue Tyr135 is the Proton donor/acceptor of the active site. Lys163 acts as the Schiff-base intermediate with substrate in catalysis. Ile205 provides a ligand contact to pyruvate.

The protein belongs to the DapA family. Homotetramer; dimer of dimers.

Its subcellular location is the cytoplasm. The enzyme catalyses L-aspartate 4-semialdehyde + pyruvate = (2S,4S)-4-hydroxy-2,3,4,5-tetrahydrodipicolinate + H2O + H(+). It participates in amino-acid biosynthesis; L-lysine biosynthesis via DAP pathway; (S)-tetrahydrodipicolinate from L-aspartate: step 3/4. Functionally, catalyzes the condensation of (S)-aspartate-beta-semialdehyde [(S)-ASA] and pyruvate to 4-hydroxy-tetrahydrodipicolinate (HTPA). In Dehalococcoides mccartyi (strain ATCC BAA-2100 / JCM 16839 / KCTC 5957 / BAV1), this protein is 4-hydroxy-tetrahydrodipicolinate synthase.